The sequence spans 342 residues: N-acetyl-gamma-glutamyl-phosphate reductase (342 aa).

Cysteine 149 is a catalytic residue.

The protein belongs to the NAGSA dehydrogenase family. Type 1 subfamily.

The protein resides in the cytoplasm. It catalyses the reaction N-acetyl-L-glutamate 5-semialdehyde + phosphate + NADP(+) = N-acetyl-L-glutamyl 5-phosphate + NADPH + H(+). Its pathway is amino-acid biosynthesis; L-arginine biosynthesis; N(2)-acetyl-L-ornithine from L-glutamate: step 3/4. Its function is as follows. Catalyzes the NADPH-dependent reduction of N-acetyl-5-glutamyl phosphate to yield N-acetyl-L-glutamate 5-semialdehyde. The polypeptide is N-acetyl-gamma-glutamyl-phosphate reductase (Laribacter hongkongensis (strain HLHK9)).